The sequence spans 431 residues: MDRIRIVGGRTLEGTIKISGAKNAALPLMIASLLTSETLTLENVPALADVNMLLRILGHHGVDYSVNGRRAGEEPHASRAIHLTAGTIVDIMAPYDLVSKMRASFWVIAPLLARMGEARVSLPGGCAIGTRPVDLLLMVLEKLGAKIEIEAGYVHAKAPKGLHGAEITFPKVTVGGTHTALMAASLAQGHTLLVNAAREPEIVDLANCLTKMGAKIKGAGQSTVEIEGVGRLSGASHKVLPDRIEAGTYAIAVAMAGGDVLLEGAEADLLQTALDTIEQAGARISVTNEGIRVRRNGAGLQPVDVTTAPFPGFPTDLQAQFMALMTKAKGSSTITETIFENRFMHVQELARLGAHIRLEGDAAIVEGVETLQGAPVMATDLRASVSLVIAALAAQGETMVNRVYHLDRGFEHLEEKLGRCGAIIERISGTA.

22–23 (KN) contributes to the phosphoenolpyruvate binding site. Arg102 contacts UDP-N-acetyl-alpha-D-glucosamine. Cys126 functions as the Proton donor in the catalytic mechanism. Cys126 carries the post-translational modification 2-(S-cysteinyl)pyruvic acid O-phosphothioketal. UDP-N-acetyl-alpha-D-glucosamine-binding positions include 131-135 (RPVDL), Asp316, and Ile338.

This sequence belongs to the EPSP synthase family. MurA subfamily.

The protein resides in the cytoplasm. The catalysed reaction is phosphoenolpyruvate + UDP-N-acetyl-alpha-D-glucosamine = UDP-N-acetyl-3-O-(1-carboxyvinyl)-alpha-D-glucosamine + phosphate. Its pathway is cell wall biogenesis; peptidoglycan biosynthesis. Functionally, cell wall formation. Adds enolpyruvyl to UDP-N-acetylglucosamine. The polypeptide is UDP-N-acetylglucosamine 1-carboxyvinyltransferase (Beijerinckia indica subsp. indica (strain ATCC 9039 / DSM 1715 / NCIMB 8712)).